Here is a 90-residue protein sequence, read N- to C-terminus: RNA-binding protein Hfq (90 aa).

The 61-residue stretch at 9-69 (DRFLNHLRVN…ISTIIPSSYV (61 aa)) folds into the Sm domain.

This sequence belongs to the Hfq family. As to quaternary structure, homohexamer.

Functionally, RNA chaperone that binds small regulatory RNA (sRNAs) and mRNAs to facilitate mRNA translational regulation in response to envelope stress, environmental stress and changes in metabolite concentrations. Also binds with high specificity to tRNAs. The protein is RNA-binding protein Hfq of Thermotoga petrophila (strain ATCC BAA-488 / DSM 13995 / JCM 10881 / RKU-1).